Reading from the N-terminus, the 130-residue chain is Small ribosomal subunit protein uS11c (130 aa).

The protein belongs to the universal ribosomal protein uS11 family. Part of the 30S ribosomal subunit.

It localises to the plastid. Its subcellular location is the chloroplast. In Physcomitrium patens (Spreading-leaved earth moss), this protein is Small ribosomal subunit protein uS11c.